The chain runs to 909 residues: Alanine--tRNA ligase (909 aa).

Residues H600, H604, C704, and H708 each contribute to the Zn(2+) site.

Belongs to the class-II aminoacyl-tRNA synthetase family. Zn(2+) is required as a cofactor.

The protein localises to the cytoplasm. The enzyme catalyses tRNA(Ala) + L-alanine + ATP = L-alanyl-tRNA(Ala) + AMP + diphosphate. Functionally, catalyzes the attachment of alanine to tRNA(Ala) in a two-step reaction: alanine is first activated by ATP to form Ala-AMP and then transferred to the acceptor end of tRNA(Ala). Also edits incorrectly charged Ser-tRNA(Ala) and Gly-tRNA(Ala) via its editing domain. The protein is Alanine--tRNA ligase of Staphylothermus marinus (strain ATCC 43588 / DSM 3639 / JCM 9404 / F1).